We begin with the raw amino-acid sequence, 306 residues long: MAALLGRDLLSLADLTPTELQELLQLATQLKSQQLKLRCNKVLGLLFSKASTRTRVSFTVAMYQLGGQVIDLNPNVTQVSRGEPVQDTARVLERYLDVLAIRTFEQQELATFAEYAKIPVINALTDLEHPCQILADLLTAQECFDTISGLTLTYVGDGNNVANSLMLGCALAGMNVRIATPSGYEPNPQVVAQAQAIADGKTEILLTNDPELATKGASVLYTDVWASMGQEAEANDRFPIFQPYQISEKLLSLAEPNAIVLHCLPAHRGEEITEEVIEGSQSRVWQQAENRLHVQKALLASILGAE.

Residues 51–54, Gln78, Arg102, and 129–132 each bind carbamoyl phosphate; these read STRT and HPCQ. Residues Asn160, Asp223, and 227–228 contribute to the L-ornithine site; that span reads SM. Carbamoyl phosphate contacts are provided by residues 263–264 and Arg291; that span reads CL.

This sequence belongs to the aspartate/ornithine carbamoyltransferase superfamily. OTCase family.

It localises to the cytoplasm. The catalysed reaction is carbamoyl phosphate + L-ornithine = L-citrulline + phosphate + H(+). It participates in amino-acid biosynthesis; L-arginine biosynthesis; L-arginine from L-ornithine and carbamoyl phosphate: step 1/3. In terms of biological role, reversibly catalyzes the transfer of the carbamoyl group from carbamoyl phosphate (CP) to the N(epsilon) atom of ornithine (ORN) to produce L-citrulline. The chain is Ornithine carbamoyltransferase from Trichormus variabilis (strain ATCC 29413 / PCC 7937) (Anabaena variabilis).